A 262-amino-acid chain; its full sequence is Snake venom serine proteinase 9 (262 aa).

The N-terminal stretch at 1–18 is a signal peptide; it reads MVLIRVLANLLILQLSYA. Positions 19–24 are excised as a propeptide; sequence QKSSEL. A Peptidase S1 domain is found at 25–253; sequence VIGGDECNID…HLDWIQSIIA (229 aa). Cystine bridges form between Cys31-Cys165, Cys52-Cys68, Cys144-Cys214, Cys176-Cys193, and Cys204-Cys229. His67 serves as the catalytic Charge relay system. Asn105 carries an N-linked (GlcNAc...) asparagine glycan. Catalysis depends on Asp112, which acts as the Charge relay system. Catalysis depends on Ser208, which acts as the Charge relay system.

Belongs to the peptidase S1 family. Snake venom subfamily. In terms of assembly, monomer. Expressed by the venom gland.

It localises to the secreted. Its function is as follows. Snake venom serine protease that may act in the hemostasis system of the prey. In Crotalus adamanteus (Eastern diamondback rattlesnake), this protein is Snake venom serine proteinase 9.